The primary structure comprises 251 residues: Tryptophan synthase alpha chain (251 aa).

Residues Glu-46 and Asp-57 each act as proton acceptor in the active site.

This sequence belongs to the TrpA family. Tetramer of two alpha and two beta chains.

The enzyme catalyses (1S,2R)-1-C-(indol-3-yl)glycerol 3-phosphate + L-serine = D-glyceraldehyde 3-phosphate + L-tryptophan + H2O. It participates in amino-acid biosynthesis; L-tryptophan biosynthesis; L-tryptophan from chorismate: step 5/5. Its function is as follows. The alpha subunit is responsible for the aldol cleavage of indoleglycerol phosphate to indole and glyceraldehyde 3-phosphate. The sequence is that of Tryptophan synthase alpha chain from Karelsulcia muelleri (strain GWSS) (Sulcia muelleri).